A 382-amino-acid polypeptide reads, in one-letter code: Fimbrial usher domain-containing protein YdeT (382 aa).

The sequence is that of Fimbrial usher domain-containing protein YdeT (ydeT) from Escherichia coli (strain K12).